Consider the following 24-residue polypeptide: Calreticulin (24 aa).

The protein belongs to the calreticulin family. Monomer. Component of an EIF2 complex at least composed of CELF1/CUGBP1, CALR, CALR3, EIF2S1, EIF2S2, HSP90B1 and HSPA5. Interacts with PDIA3/ERp57 and SPACA9. Interacts with TRIM21. Interacts with NR3C1. Interacts with PPIB. Interacts (via P-domain) with PDIA5. Interacts with CLCC1. As to expression, pancreas.

It localises to the endoplasmic reticulum lumen. The protein localises to the cytoplasm. Its subcellular location is the cytosol. The protein resides in the cytolytic granule. It is found in the secreted. It localises to the extracellular space. The protein localises to the extracellular matrix. Its subcellular location is the cell surface. The protein resides in the sarcoplasmic reticulum lumen. It is found in the cytoplasmic vesicle. It localises to the secretory vesicle. The protein localises to the cortical granule. In terms of biological role, calcium-binding chaperone that promotes folding, oligomeric assembly and quality control in the endoplasmic reticulum (ER) via the calreticulin/calnexin cycle. This lectin interacts transiently with almost all of the monoglucosylated glycoproteins that are synthesized in the ER. Interacts with the DNA-binding domain of NR3C1 and mediates its nuclear export. Involved in maternal gene expression regulation. May participate in oocyte maturation via the regulation of calcium homeostasis. Present in the cortical granules of non-activated oocytes, is exocytosed during the cortical reaction in response to oocyte activation and might participate in the block to polyspermy. This Canis lupus familiaris (Dog) protein is Calreticulin (CALR).